The primary structure comprises 316 residues: 4-hydroxyphenylacetate decarboxylase activating enzyme (316 aa).

Positions 20-307 constitute a Radical SAM core domain; it reads HDGPGCRTTV…QDIFLDNGIA (288 aa). Cys-34, Cys-38, Cys-41, Cys-60, Cys-66, Cys-69, and Cys-105 together coordinate [4Fe-4S] cluster. 40–42 lines the S-adenosyl-L-methionine pocket; sequence WCA. One can recognise a 4Fe-4S ferredoxin-type domain in the interval 84 to 115; it reads NKPVIDWNICKDCESFECVNSCYYNAFKLCAK. Residues Gly-144, 193–195, and His-267 contribute to the S-adenosyl-L-methionine site; that span reads DIK.

It belongs to the organic radical-activating enzymes family. Monomer. It depends on [4Fe-4S] cluster as a cofactor.

The enzyme catalyses glycyl-[protein] + reduced [flavodoxin] + S-adenosyl-L-methionine = glycin-2-yl radical-[protein] + semiquinone [flavodoxin] + 5'-deoxyadenosine + L-methionine + H(+). Functionally, catalyzes activation of 4-hydroxyphenylacetate decarboxylase under anaerobic conditions by generation of an organic free radical on a glycine residue, via a homolytic cleavage of S-adenosyl-L-methionine (SAM). This chain is 4-hydroxyphenylacetate decarboxylase activating enzyme, found in Clostridioides difficile (strain 630) (Peptoclostridium difficile).